The following is a 487-amino-acid chain: NAD-dependent histone deacetylase HST3 (487 aa).

In terms of domain architecture, Deacetylase sirtuin-type spans 15 to 336 (PADTSIKLHE…FLTQEQLDSE (322 aa)). NAD(+) contacts are provided by residues 40–59 (GAGI…DGLY) and 129–132 (QNID). The Proton acceptor role is filled by His-167. Zn(2+) is bound by residues Cys-175, Cys-178, Cys-200, and Cys-203. Residues 261 to 263 (GTS), 291 to 293 (NKT), and Cys-312 each bind NAD(+). Residues 397–406 (VESVSVKEEP) are compositionally biased toward basic and acidic residues. Positions 397–487 (VESVSVKEEP…ARKGITLDQH (91 aa)) are disordered. Basic residues predominate over residues 415-425 (HKPKQATKLKR). The span at 448–459 (DQLSSPASSING) shows a compositional bias: polar residues.

This sequence belongs to the sirtuin family. Class I subfamily. Zn(2+) is required as a cofactor.

It localises to the cytoplasm. The protein resides in the nucleus. It catalyses the reaction N(6)-acetyl-L-lysyl-[protein] + NAD(+) + H2O = 2''-O-acetyl-ADP-D-ribose + nicotinamide + L-lysyl-[protein]. Its function is as follows. NAD-dependent histone deacetylase, which could function in telomeric silencing, cell cycle progression and chromosome stability. In Candida albicans (strain SC5314 / ATCC MYA-2876) (Yeast), this protein is NAD-dependent histone deacetylase HST3 (HST3).